The primary structure comprises 202 residues: Ras-related protein Rab-1A (202 aa).

GTP is bound by residues 15–23 (GDSGVGKSC), 33–40 (YSESFIST), 63–67 (DTAGQ), 121–124 (NKSD), and 151–153 (SAK). Residues 37–45 (FISTIGVDF) carry the Effector region motif. The tract at residues 180-202 (QTVDKNKVVPGSSAPISPKSGCC) is disordered. 2 S-geranylgeranyl cysteine lipidation sites follow: cysteine 201 and cysteine 202.

Belongs to the small GTPase superfamily. Rab family.

Its subcellular location is the cell membrane. The protein is Ras-related protein Rab-1A (rab1A) of Dictyostelium discoideum (Social amoeba).